The sequence spans 102 residues: Cytochrome b (102 aa).

3 consecutive transmembrane segments (helical) span residues 1–21 (FGSL…FLAM), 45–66 (WLIR…YMHI), and 81–101 (WNIG…GYVF). Heme b-binding residues include His51 and His65.

Belongs to the cytochrome b family. The cytochrome bc1 complex contains 3 respiratory subunits (MT-CYB, CYC1 and UQCRFS1), 2 core proteins (UQCRC1 and UQCRC2) and probably 6 low-molecular weight proteins. The cofactor is heme b.

It localises to the mitochondrion inner membrane. Component of the ubiquinol-cytochrome c reductase complex (complex III or cytochrome b-c1 complex) that is part of the mitochondrial respiratory chain. The b-c1 complex mediates electron transfer from ubiquinol to cytochrome c. Contributes to the generation of a proton gradient across the mitochondrial membrane that is then used for ATP synthesis. This Plethodon yonahlossee (Yonahlossee salamander) protein is Cytochrome b (mt-cyb).